Consider the following 112-residue polypeptide: Large ribosomal subunit protein eL34A (112 aa).

Belongs to the eukaryotic ribosomal protein eL34 family. As to quaternary structure, component of the large ribosomal subunit (LSU). Mature yeast ribosomes consist of a small (40S) and a large (60S) subunit. The 40S small subunit contains 1 molecule of ribosomal RNA (18S rRNA) and at least 33 different proteins. The large 60S subunit contains 3 rRNA molecules (25S, 5.8S and 5S rRNA) and at least 46 different proteins.

It is found in the cytoplasm. Component of the ribosome, a large ribonucleoprotein complex responsible for the synthesis of proteins in the cell. The small ribosomal subunit (SSU) binds messenger RNAs (mRNAs) and translates the encoded message by selecting cognate aminoacyl-transfer RNA (tRNA) molecules. The large subunit (LSU) contains the ribosomal catalytic site termed the peptidyl transferase center (PTC), which catalyzes the formation of peptide bonds, thereby polymerizing the amino acids delivered by tRNAs into a polypeptide chain. The nascent polypeptides leave the ribosome through a tunnel in the LSU and interact with protein factors that function in enzymatic processing, targeting, and the membrane insertion of nascent chains at the exit of the ribosomal tunnel. The protein is Large ribosomal subunit protein eL34A (rpl3401) of Schizosaccharomyces pombe (strain 972 / ATCC 24843) (Fission yeast).